We begin with the raw amino-acid sequence, 597 residues long: Gamma-terpinene synthase, chloroplastic (597 aa).

The transit peptide at 1–47 (MATLSMQVSILSKQVKNLNSFGMRASKLPMVARRVDVSTTRLRPICS) directs the protein to the chloroplast. Mn(2+) contacts are provided by Asp-350 and Asp-354. A DDXXD motif motif is present at residues 350 to 354 (DDVYD). Homodimerization stretches follow at residues 356-362 (YGTLDEL) and 428-464 (EAKWYYAGYTPTLAEYLENAKVSISSPTIISQVYFTL). Residues Asp-494 and Glu-502 each coordinate Mn(2+).

It belongs to the terpene synthase family. As to quaternary structure, homodimer. Mn(2+) is required as a cofactor. Mg(2+) serves as cofactor.

It localises to the plastid. The protein resides in the chloroplast. The enzyme catalyses (2E)-geranyl diphosphate = gamma-terpinene + diphosphate. It participates in secondary metabolite biosynthesis; terpenoid biosynthesis. Its function is as follows. Involved in the biosynthesis of phenolic monoterpenes natural products thymol and carvacrol which have a broad range of biological activities acting as antimicrobial compounds, insecticides, antioxidants and pharmaceutical agents. Monoterpene synthase which catalyzes the conversion of geranyl diphosphate (GPP) to gamma-terpinene. This Thymus caespititius (Cretan thyme) protein is Gamma-terpinene synthase, chloroplastic.